A 603-amino-acid polypeptide reads, in one-letter code: Elongation factor 4 (603 aa).

The 183-residue stretch at 7–189 folds into the tr-type G domain; it reads SRLRNFCIIA…AVVDRIPSPK (183 aa). GTP is bound by residues 19–24 and 136–139; these read DHGKST and NKVD.

This sequence belongs to the TRAFAC class translation factor GTPase superfamily. Classic translation factor GTPase family. LepA subfamily.

The protein localises to the cell inner membrane. It carries out the reaction GTP + H2O = GDP + phosphate + H(+). In terms of biological role, required for accurate and efficient protein synthesis under certain stress conditions. May act as a fidelity factor of the translation reaction, by catalyzing a one-codon backward translocation of tRNAs on improperly translocated ribosomes. Back-translocation proceeds from a post-translocation (POST) complex to a pre-translocation (PRE) complex, thus giving elongation factor G a second chance to translocate the tRNAs correctly. Binds to ribosomes in a GTP-dependent manner. The sequence is that of Elongation factor 4 from Prochlorococcus marinus (strain NATL1A).